The following is a 100-amino-acid chain: Movement protein TGBp3 (100 aa).

The Lumenal portion of the chain corresponds to 1–41 (MQTAPREYSTSGPTAVLAPTTNTQHYAPYSLYRFLSSHKLD). The helical transmembrane segment at 42–59 (LLLGIALLVFLYVITAAP) threads the bilayer. Residues 60–100 (KEVCQVVITGESVVIRNCQQPDRILANLNLSPWNGVKFPLL) lie on the Cytoplasmic side of the membrane.

This sequence belongs to the Tymovirales TGBp3 protein family.

It is found in the host endoplasmic reticulum membrane. Its function is as follows. Plays a role in viral cell-to-cell propagation, by facilitating genome transport to neighboring plant cells through plasmosdesmata. May induce the formation of granular vesicles derived from the Endoplasmic reticulum, which align on actin filaments. In Narcissus mosaic virus (NMV), this protein is Movement protein TGBp3.